The sequence spans 294 residues: N-acetylmuramic acid 6-phosphate etherase (294 aa).

The region spanning valine 54–lysine 217 is the SIS domain. Glutamate 82 (proton donor) is an active-site residue. The active site involves glutamate 113.

The protein belongs to the GCKR-like family. MurNAc-6-P etherase subfamily. In terms of assembly, homodimer.

The enzyme catalyses N-acetyl-D-muramate 6-phosphate + H2O = N-acetyl-D-glucosamine 6-phosphate + (R)-lactate. The protein operates within amino-sugar metabolism; N-acetylmuramate degradation. Its function is as follows. Specifically catalyzes the cleavage of the D-lactyl ether substituent of MurNAc 6-phosphate, producing GlcNAc 6-phosphate and D-lactate. The protein is N-acetylmuramic acid 6-phosphate etherase of Bacillus cytotoxicus (strain DSM 22905 / CIP 110041 / 391-98 / NVH 391-98).